The following is a 436-amino-acid chain: Glutamate-1-semialdehyde 2,1-aminomutase (436 aa).

Position 274 is an N6-(pyridoxal phosphate)lysine (lysine 274).

The protein belongs to the class-III pyridoxal-phosphate-dependent aminotransferase family. HemL subfamily. In terms of assembly, homodimer. Requires pyridoxal 5'-phosphate as cofactor.

Its subcellular location is the cytoplasm. It carries out the reaction (S)-4-amino-5-oxopentanoate = 5-aminolevulinate. The protein operates within porphyrin-containing compound metabolism; protoporphyrin-IX biosynthesis; 5-aminolevulinate from L-glutamyl-tRNA(Glu): step 2/2. The sequence is that of Glutamate-1-semialdehyde 2,1-aminomutase from Albidiferax ferrireducens (strain ATCC BAA-621 / DSM 15236 / T118) (Rhodoferax ferrireducens).